Here is an 88-residue protein sequence, read N- to C-terminus: Early E1B 9 kDa protein (88 aa).

Positions 23 to 88 are disordered; that stretch reads NMEGSQDEDN…DLFPELRRLP (66 aa). A compositionally biased stretch (low complexity) spans 34-44; it reads RLLASAASGSS.

The chain is Early E1B 9 kDa protein from Homo sapiens (Human).